Reading from the N-terminus, the 191-residue chain is Phosphoheptose isomerase (191 aa).

Residues 37–191 (IAESFKQDGK…IIQLIEKEME (155 aa)) enclose the SIS domain. 52–54 (NGG) contributes to the substrate binding site. Residues H61 and E65 each contribute to the Zn(2+) site. Substrate contacts are provided by residues E65, 93–94 (ND), 119–121 (STS), S124, and Q172. Zn(2+)-binding residues include Q172 and H180.

This sequence belongs to the SIS family. GmhA subfamily. As to quaternary structure, homotetramer. Zn(2+) serves as cofactor.

It localises to the cytoplasm. It catalyses the reaction 2 D-sedoheptulose 7-phosphate = D-glycero-alpha-D-manno-heptose 7-phosphate + D-glycero-beta-D-manno-heptose 7-phosphate. It functions in the pathway carbohydrate biosynthesis; D-glycero-D-manno-heptose 7-phosphate biosynthesis; D-glycero-alpha-D-manno-heptose 7-phosphate and D-glycero-beta-D-manno-heptose 7-phosphate from sedoheptulose 7-phosphate: step 1/1. Its pathway is bacterial outer membrane biogenesis; LPS core biosynthesis. Functionally, catalyzes the isomerization of sedoheptulose 7-phosphate in D-glycero-D-manno-heptose 7-phosphate. In Vibrio vulnificus (strain CMCP6), this protein is Phosphoheptose isomerase.